A 570-amino-acid chain; its full sequence is MSAEEADKTTTTDASAGDEEEEWLYGDEGESKETEEEEAKLTAAISATSTTPVAEDAPTTTNNSSDSATPPTTTTTTGNGVASQEEAPGEDEDSESDSDDDDDDVRVTIGDIKTGAPQYTGYGGTPVNLNIKSAGSRAYGAGAKVKGVDLEAPGSINGVPVLEADMESFEEKPWRKPGADLSDYFNYGFNEDTWKAYCEKQKRLRMGLDVLNIGSTTSKISVQQGRTGNNEKEITIPAHASKAEFTSPSNLYKAGLNQGRISPPHWAGPPSQDLSYYTKTPGTIDVIGGQTATISRVEGRRRHNLEGNNIQVISEHSSSEVEPEVQKMPPPFFPPGPLPPNIPPPPFLPPPVSQAPPLIPPHRMPITVPPPNFPPPTGGPPPSLIPTLDNSGHPGGYDGRPVAPYPFPTGGFPPPMQGAVNPWPGLMENPKQWDYYPRRDKEREKERERERQRDRGHERDHSPNAGPYNSMAMCSDEERYRSYRDYGDRGYERHRERASREKEERHGGRRHREKEEGRHKSSRSSSRRRHESEEGDSHRRHKHKKSKRSKEGKEPSEERSADQENQEAME.

The segment covering methionine 1–threonine 10 has biased composition (basic and acidic residues). A disordered region spans residues methionine 1 to valine 107. Positions alanine 16–glutamate 38 are enriched in acidic residues. Over residues aspartate 56 to threonine 77 the composition is skewed to low complexity. Residues alanine 87–aspartate 104 are compositionally biased toward acidic residues. Residue threonine 125 is modified to Phosphothreonine. A Phosphoserine modification is found at serine 247. Disordered regions lie at residues arginine 300–methionine 328, proline 371–arginine 400, and glycine 418–glutamate 570. Residues proline 371–leucine 384 are compositionally biased toward pro residues. Basic and acidic residues-rich tracts occupy residues tyrosine 436 to serine 462 and aspartate 476 to histidine 506. 2 stretches are compositionally biased toward basic residues: residues lysine 520–arginine 529 and histidine 538–arginine 548. Over residues serine 549–aspartate 562 the composition is skewed to basic and acidic residues.

This sequence belongs to the FIP1 family.

Its subcellular location is the nucleus. In terms of biological role, involved in mRNA processing. The polypeptide is Pre-mRNA 3'-end-processing factor FIP1 (fip1l1) (Danio rerio (Zebrafish)).